Reading from the N-terminus, the 400-residue chain is Tryptophan synthase beta chain (400 aa).

Position 90 is an N6-(pyridoxal phosphate)lysine (Lys-90).

Belongs to the TrpB family. Tetramer of two alpha and two beta chains. The cofactor is pyridoxal 5'-phosphate.

It catalyses the reaction (1S,2R)-1-C-(indol-3-yl)glycerol 3-phosphate + L-serine = D-glyceraldehyde 3-phosphate + L-tryptophan + H2O. Its pathway is amino-acid biosynthesis; L-tryptophan biosynthesis; L-tryptophan from chorismate: step 5/5. Its function is as follows. The beta subunit is responsible for the synthesis of L-tryptophan from indole and L-serine. This chain is Tryptophan synthase beta chain (trpB), found in Bacillus subtilis (strain 168).